A 274-amino-acid polypeptide reads, in one-letter code: 2,3,4,5-tetrahydropyridine-2,6-dicarboxylate N-succinyltransferase (274 aa).

R104 and D141 together coordinate substrate.

The protein belongs to the transferase hexapeptide repeat family. As to quaternary structure, homotrimer.

The protein resides in the cytoplasm. It catalyses the reaction (S)-2,3,4,5-tetrahydrodipicolinate + succinyl-CoA + H2O = (S)-2-succinylamino-6-oxoheptanedioate + CoA. It functions in the pathway amino-acid biosynthesis; L-lysine biosynthesis via DAP pathway; LL-2,6-diaminopimelate from (S)-tetrahydrodipicolinate (succinylase route): step 1/3. Its activity is regulated as follows. Inhibited by p-(chloromercuri)benzenesulfonic acid and cobalt. This is 2,3,4,5-tetrahydropyridine-2,6-dicarboxylate N-succinyltransferase (dapD) from Unknown prokaryotic organism.